The primary structure comprises 156 residues: Transcription antitermination protein NusB (156 aa).

This sequence belongs to the NusB family.

Functionally, involved in transcription antitermination. Required for transcription of ribosomal RNA (rRNA) genes. Binds specifically to the boxA antiterminator sequence of the ribosomal RNA (rrn) operons. The sequence is that of Transcription antitermination protein NusB from Mycobacterium bovis (strain ATCC BAA-935 / AF2122/97).